The sequence spans 356 residues: Icosanoyl-CoA 5-desaturase (356 aa).

A helical transmembrane segment spans residues 5-25 (LYFPISISLSLSLEAMASFIA). Positions 38 to 58 (LDPKIPTKPEPKTETPKPKDD) are disordered. The span at 42–58 (IPTKPEPKTETPKPKDD) shows a compositional bias: basic and acidic residues. A run of 2 helical transmembrane segments spans residues 88 to 108 (NAVTLLVLHALAAMAPFYFSW) and 111 to 131 (FWISFILLGFASGVLGITLCF). A Histidine box-1 motif is present at residues 132-137 (HRCLTH). The short motif at 169-173 (HRYHH) is the Histidine box-2 element. A helical membrane pass occupies residues 236–256 (ALIALLYYVGGFPYIVWGMGF). The Histidine box-3 motif lies at 302–306 (HNNHH).

It belongs to the fatty acid desaturase type 1 family. It depends on Fe(2+) as a cofactor.

The protein localises to the membrane. The catalysed reaction is eicosanoyl-CoA + 2 Fe(II)-[cytochrome b5] + O2 + 2 H(+) = (5Z)-eicosenoyl-CoA + 2 Fe(III)-[cytochrome b5] + 2 H2O. It functions in the pathway lipid metabolism; monounsaturated fatty acid biosynthesis. Its function is as follows. Desaturase involved in the biosynthesis of (5Z)-icos-5-enoate, an unusual monounsaturated fatty acid that makes up to 60% of the total fatty acids in Limnanthes sp. seed oil. Only acts on saturated fatty acids. The protein is Icosanoyl-CoA 5-desaturase of Limnanthes douglasii (Douglas' meadowfoam).